The primary structure comprises 955 residues: Probable trehalose monomycolate exporter MmpL3 (955 aa).

The Cytoplasmic segment spans residues 1–13 (MFAWWGRTVYRYR). The helical transmembrane segment at 14–34 (FIVIGITVALCLCGGVFGLSL) threads the bilayer. Topologically, residues 35-190 (GKHVTQSGFY…TIATDQRRME (156 aa)) are periplasmic. 40-44 (QSGFY) contributes to the a 1,2-diacylglycero-3-phosphoethanolamine binding site. A helical transmembrane segment spans residues 191 to 213 (VLALPLVAVVLFLVFGGVIAACL). Residues 214–219 (PVMVGG) lie on the Cytoplasmic side of the membrane. A helical membrane pass occupies residues 220–236 (LSIAGALGILRFIALFG). Residues 237–244 (PVHFFAQP) lie on the Periplasmic side of the membrane. A helical transmembrane segment spans residues 245-262 (VVSLIGLGIAVDYGLFVV). Topologically, residues 263-291 (SRFREEIAEGYDTEAAVRRTVMTAGRTVT) are cytoplasmic. The chain crosses the membrane as a helical span at residues 292–312 (FSAVLIAASGASLLLLPQGFV). The Periplasmic segment spans residues 313 to 319 (KSLTYAL). A helical membrane pass occupies residues 320-340 (IAAVTLAALLSITLLPACLAI). At 341–401 (LAKHVDALGV…KLVNFVMKRP (61 aa)) the chain is on the cytoplasmic side. A helical membrane pass occupies residues 402–422 (LVFAIPIVIGMILLVIPLGNL). Over 423-567 (SFGGMSEKYL…HSLVAQAPLM (145 aa)) the chain is Periplasmic. A helical transmembrane segment spans residues 568–588 (VIMLITTTMLLMFLAFGSFVL). The Cytoplasmic segment spans residues 589–591 (PIK). The chain crosses the membrane as a helical span at residues 592-612 (AAVMSALTLGSTMGILTWIFV). Residues 613–621 (DGHLSKWLN) lie on the Periplasmic side of the membrane. Residues 622–642 (FTPTPLMVVIIALVVAVGYGL) traverse the membrane as a helical segment. Over 643 to 678 (ATDYEVFLVSRMVEARAESMSTQEAVRIGTASTGRL) the chain is Cytoplasmic. Residues 679–699 (ITAAALVLAVVAGSFVFSDLV) form a helical membrane-spanning segment. At 700-703 (MMKY) the chain is on the periplasmic side. Residues 704–724 (LAFGLMAALLLDATVVRMFLV) form a helical membrane-spanning segment. The Cytoplasmic segment spans residues 725 to 955 (PSVMKLLGDD…QDLLRREGRL (231 aa)). The disordered stretch occupies residues 759-955 (ERRRPTVSGR…QDLLRREGRL (197 aa)). 2 stretches are compositionally biased toward polar residues: residues 821–860 (GASTARIQMRPSQSVEATTTRLSVPGNAPTTAAVSSSQGV) and 890–902 (NRSSDNASETAEP).

Belongs to the resistance-nodulation-cell division (RND) (TC 2.A.6) family. MmpL subfamily.

The protein resides in the cell inner membrane. It localises to the cell septum. Its subcellular location is the cell tip. Its function is as follows. Transports trehalose monomycolate (TMM) to the cell wall. Flips TMM across the inner membrane. Membrane potential is not required for this function. Transports probably phosphatidylethanolamine (PE) as well. Contributes to membrane potential, cell wall composition, antibiotic susceptibility and fitness. This Mycobacterium leprae (strain TN) protein is Probable trehalose monomycolate exporter MmpL3 (mmpL3).